Consider the following 631-residue polypeptide: Probable electron transfer flavoprotein-ubiquinone oxidoreductase, mitochondrial (631 aa).

65-79 (VCIVGGGPAGLATAI) lines the FAD pocket. Cysteine 574, cysteine 600, cysteine 603, and cysteine 606 together coordinate [4Fe-4S] cluster. A 4Fe-4S ferredoxin-type domain is found at 591-620 (TRLQINSQNCIHCKTCDIKAPRQDITWKVP).

The protein belongs to the ETF-QO/FixC family. [4Fe-4S] cluster is required as a cofactor. The cofactor is FAD.

The protein resides in the mitochondrion inner membrane. The catalysed reaction is a ubiquinone + reduced [electron-transfer flavoprotein] = a ubiquinol + oxidized [electron-transfer flavoprotein] + H(+). Functionally, accepts electrons from ETF and reduces ubiquinone. This is Probable electron transfer flavoprotein-ubiquinone oxidoreductase, mitochondrial (CIR2) from Saccharomyces cerevisiae (strain ATCC 204508 / S288c) (Baker's yeast).